Consider the following 350-residue polypeptide: Probable choline kinase 2 (350 aa).

ATP contacts are provided by Arg-73, Gln-210, and Asp-227.

This sequence belongs to the choline/ethanolamine kinase family.

It carries out the reaction choline + ATP = phosphocholine + ADP + H(+). Its pathway is phospholipid metabolism; phosphatidylcholine biosynthesis; phosphocholine from choline: step 1/1. Involved in phospholipid biosynthesis. Catalyzes the first step in phosphatidylcholine biosynthesis. The polypeptide is Probable choline kinase 2 (Arabidopsis thaliana (Mouse-ear cress)).